We begin with the raw amino-acid sequence, 304 residues long: UDP-3-O-acyl-N-acetylglucosamine deacetylase (304 aa).

Histidine 78, histidine 237, and aspartate 241 together coordinate Zn(2+). The active-site Proton donor is the histidine 264.

It belongs to the LpxC family. The cofactor is Zn(2+).

The catalysed reaction is a UDP-3-O-[(3R)-3-hydroxyacyl]-N-acetyl-alpha-D-glucosamine + H2O = a UDP-3-O-[(3R)-3-hydroxyacyl]-alpha-D-glucosamine + acetate. It participates in glycolipid biosynthesis; lipid IV(A) biosynthesis; lipid IV(A) from (3R)-3-hydroxytetradecanoyl-[acyl-carrier-protein] and UDP-N-acetyl-alpha-D-glucosamine: step 2/6. Functionally, catalyzes the hydrolysis of UDP-3-O-myristoyl-N-acetylglucosamine to form UDP-3-O-myristoylglucosamine and acetate, the committed step in lipid A biosynthesis. The protein is UDP-3-O-acyl-N-acetylglucosamine deacetylase of Thioalkalivibrio sulfidiphilus (strain HL-EbGR7).